Here is a 491-residue protein sequence, read N- to C-terminus: uncharacterized protein (491 aa).

W99 provides a ligand contact to substrate. N137 contacts Ca(2+). H138 contributes to the substrate binding site. E177 and D190 together coordinate Ca(2+). R219 serves as a coordination point for substrate. Ca(2+) contacts are provided by D221, H225, and E245. D221 (nucleophile) is an active-site residue. K224–H225 contributes to the substrate binding site. E245 functions as the Proton donor in the catalytic mechanism. Positions 249, 312, and 360 each coordinate substrate.

It belongs to the glycosyl hydrolase 13 family. It depends on Ca(2+) as a cofactor.

It localises to the cytoplasm. The protein resides in the nucleus. This is an uncharacterized protein from Schizosaccharomyces pombe (strain 972 / ATCC 24843) (Fission yeast).